We begin with the raw amino-acid sequence, 173 residues long: Thiol-disulfide oxidoreductase ResA (173 aa).

Residues 10-29 form a helical; Signal-anchor for type II membrane protein membrane-spanning segment; sequence VIILLILCGAVGFTLYQGFF. The 139-residue stretch at 35–173 folds into the Thioredoxin domain; the sequence is MQIGKEAPNF…LEGYLQKITP (139 aa). Cys73 and Cys76 form a disulfide bridge.

The protein belongs to the thioredoxin family. ResA subfamily.

The protein localises to the cell membrane. It participates in protein modification; cytochrome c assembly. Functionally, thiol-disulfide oxidoreductase which is required in disulfide reduction during c-type cytochrome synthesis. May accept reducing equivalents from CcdA, leading to breakage of disulfide bonds in apocytochrome c; following this reduction heme can be covalently attached. The sequence is that of Thiol-disulfide oxidoreductase ResA from Bacillus cereus (strain ZK / E33L).